Reading from the N-terminus, the 366-residue chain is Ribosomal RNA large subunit methyltransferase M (366 aa).

S-adenosyl-L-methionine contacts are provided by residues Ser-188, 221 to 224 (CPGG), Asp-240, Asp-260, and Asp-277. Lys-306 (proton acceptor) is an active-site residue.

This sequence belongs to the class I-like SAM-binding methyltransferase superfamily. RNA methyltransferase RlmE family. RlmM subfamily. As to quaternary structure, monomer.

The protein localises to the cytoplasm. The catalysed reaction is cytidine(2498) in 23S rRNA + S-adenosyl-L-methionine = 2'-O-methylcytidine(2498) in 23S rRNA + S-adenosyl-L-homocysteine + H(+). Catalyzes the 2'-O-methylation at nucleotide C2498 in 23S rRNA. This chain is Ribosomal RNA large subunit methyltransferase M, found in Salmonella arizonae (strain ATCC BAA-731 / CDC346-86 / RSK2980).